The following is a 309-amino-acid chain: tRNA dimethylallyltransferase 1 (309 aa).

14 to 21 (GPTASGKS) provides a ligand contact to ATP. 16 to 21 (TASGKS) is a binding site for substrate. The segment at 39–42 (DSMQ) is interaction with substrate tRNA.

It belongs to the IPP transferase family. In terms of assembly, monomer. Requires Mg(2+) as cofactor.

The enzyme catalyses adenosine(37) in tRNA + dimethylallyl diphosphate = N(6)-dimethylallyladenosine(37) in tRNA + diphosphate. Its function is as follows. Catalyzes the transfer of a dimethylallyl group onto the adenine at position 37 in tRNAs that read codons beginning with uridine, leading to the formation of N6-(dimethylallyl)adenosine (i(6)A). The polypeptide is tRNA dimethylallyltransferase 1 (Pelobacter propionicus (strain DSM 2379 / NBRC 103807 / OttBd1)).